The chain runs to 90 residues: UPF0213 protein lwe0147 (90 aa).

The 79-residue stretch at 5 to 83 folds into the GIY-YIG domain; that stretch reads NEHFFYVLKC…SRKNKDSYLI (79 aa).

The protein belongs to the UPF0213 family.

This is UPF0213 protein lwe0147 from Listeria welshimeri serovar 6b (strain ATCC 35897 / DSM 20650 / CCUG 15529 / CIP 8149 / NCTC 11857 / SLCC 5334 / V8).